Consider the following 64-residue polypeptide: Putative antitoxin AF_1074 (64 aa).

It belongs to the UPF0165 family.

Possibly the antitoxin component of a type II toxin-antitoxin (TA) system. In Archaeoglobus fulgidus (strain ATCC 49558 / DSM 4304 / JCM 9628 / NBRC 100126 / VC-16), this protein is Putative antitoxin AF_1074.